The primary structure comprises 505 residues: ATP synthase subunit alpha (505 aa).

170–177 (GDRQTGKT) is a binding site for ATP.

This sequence belongs to the ATPase alpha/beta chains family. F-type ATPases have 2 components, CF(1) - the catalytic core - and CF(0) - the membrane proton channel. CF(1) has five subunits: alpha(3), beta(3), gamma(1), delta(1), epsilon(1). CF(0) has four main subunits: a, b, b' and c.

Its subcellular location is the cellular thylakoid membrane. It carries out the reaction ATP + H2O + 4 H(+)(in) = ADP + phosphate + 5 H(+)(out). Its function is as follows. Produces ATP from ADP in the presence of a proton gradient across the membrane. The alpha chain is a regulatory subunit. This Cyanothece sp. (strain PCC 7425 / ATCC 29141) protein is ATP synthase subunit alpha.